The primary structure comprises 256 residues: Phosphonates import ATP-binding protein PhnC (256 aa).

The region spanning 7 to 251 (IEMKNVTKVY…VFDNIYNGGK (245 aa)) is the ABC transporter domain. 40–47 (GLSGAGKS) serves as a coordination point for ATP.

Belongs to the ABC transporter superfamily. Phosphonates importer (TC 3.A.1.9.1) family. In terms of assembly, the complex is composed of two ATP-binding proteins (PhnC), two transmembrane proteins (PhnE) and a solute-binding protein (PhnD).

The protein localises to the cell membrane. It carries out the reaction phosphonate(out) + ATP + H2O = phosphonate(in) + ADP + phosphate + H(+). Its function is as follows. Part of the ABC transporter complex PhnCDE involved in phosphonates import. Responsible for energy coupling to the transport system. The protein is Phosphonates import ATP-binding protein PhnC of Lactobacillus delbrueckii subsp. bulgaricus (strain ATCC 11842 / DSM 20081 / BCRC 10696 / JCM 1002 / NBRC 13953 / NCIMB 11778 / NCTC 12712 / WDCM 00102 / Lb 14).